A 658-amino-acid chain; its full sequence is Protein CFAP20DC (658 aa).

2 disordered regions span residues 312–522 and 589–634; these read QQGE…EEEY and PVNQ…LDSS. Residues 319–328 are compositionally biased toward polar residues; sequence SHPVKQTTPL. Over residues 339 to 349 the composition is skewed to basic and acidic residues; it reads PPRDPSADKGS. 2 stretches are compositionally biased toward low complexity: residues 351-363 and 417-434; these read RRGL…SGSR and SSGP…LLLD. Over residues 494–506 the composition is skewed to basic and acidic residues; sequence DPKEDSRVTKGDT. Positions 507–521 are enriched in acidic residues; sequence ELEDDFYGSDSSEEE. Residues 625 to 634 are compositionally biased toward polar residues; sequence QPLEQSLDSS.

The chain is Protein CFAP20DC from Rattus norvegicus (Rat).